The following is an 82-amino-acid chain: RNA-binding protein Hfq (82 aa).

Residues 11 to 71 (DTFLNSVRKS…ISTIMPAQPV (61 aa)) enclose the Sm domain.

It belongs to the Hfq family. In terms of assembly, homohexamer.

Functionally, RNA chaperone that binds small regulatory RNA (sRNAs) and mRNAs to facilitate mRNA translational regulation in response to envelope stress, environmental stress and changes in metabolite concentrations. Also binds with high specificity to tRNAs. In Caulobacter sp. (strain K31), this protein is RNA-binding protein Hfq.